Reading from the N-terminus, the 691-residue chain is MNHSNARKLTTLHGFILKRNLSSFHASLKRFSDKKFFNPNHEDGGVVVERLCRANRFGEAIDVLCGQKLLREAVQLLGRAKKPPASTYCNLIQVCSQTRALEEGKKVHEHIRTSGFVPGIVIWNRLLRMYAKCGSLVDARKVFDEMPNRDLCSWNVMVNGYAEVGLLEEARKLFDEMTEKDSYSWTAMVTGYVKKDQPEEALVLYSLMQRVPNSRPNIFTVSIAVAAAAAVKCIRRGKEIHGHIVRAGLDSDEVLWSSLMDMYGKCGCIDEARNIFDKIVEKDVVSWTSMIDRYFKSSRWREGFSLFSELVGSCERPNEYTFAGVLNACADLTTEELGKQVHGYMTRVGFDPYSFASSSLVDMYTKCGNIESAKHVVDGCPKPDLVSWTSLIGGCAQNGQPDEALKYFDLLLKSGTKPDHVTFVNVLSACTHAGLVEKGLEFFYSITEKHRLSHTSDHYTCLVDLLARSGRFEQLKSVISEMPMKPSKFLWASVLGGCSTYGNIDLAEEAAQELFKIEPENPVTYVTMANIYAAAGKWEEEGKMRKRMQEIGVTKRPGSSWTEIKRKRHVFIAADTSHPMYNQIVEFLRELRKKMKEEGYVPATSLVLHDVEDEQKEENLVYHSEKLAVAFAILSTEEGTAIKVFKNLRSCVDCHGAIKFISNITKRKITVRDSTRFHCFENGQCSCGDYW.

PPR repeat units follow at residues 84 to 118 (PAST…GFVP), 119 to 149 (GIVI…MPNR), 150 to 184 (DLCS…DSYS), 185 to 211 (WTAM…MQRV), 217 to 251 (NIFT…GLDS), 252 to 286 (DEVL…DVVS), 287 to 317 (WTSM…CERP), 318 to 352 (NEYT…GFDP), 353 to 383 (YSFA…CPKP), 384 to 418 (DLVS…GTKP), 419 to 449 (DHVT…ITEK), and 455 to 485 (TSDH…MPMK). Residues 490–565 (LWASVLGGCS…RPGSSWTEIK (76 aa)) form a type E motif region. The interval 566-596 (RKRHVFIAADTSHPMYNQIVEFLRELRKKMK) is type E(+) motif. Residues 597 to 691 (EEGYVPATSL…NGQCSCGDYW (95 aa)) are type DYW motif.

It belongs to the PPR family. PCMP-H subfamily.

This chain is Pentatricopeptide repeat-containing protein At4g37170 (PCMP-H5), found in Arabidopsis thaliana (Mouse-ear cress).